The sequence spans 860 residues: Ubiquitin fusion degradation protein 3 homolog (860 aa).

WD repeat units follow at residues 27–65, 71–112, 115–154, 163–203, 204–242, and 244–283; these read AHKSDTKALAVTQGGCLISGGRDETVKFWAKKGKQYTKT, PKGI…PYAI, EHKQNVCCLHINEKATHMLSGSWDSNVIIWPITELNSSSF, GHTL…SVFK, GHTDVVRALVVLSSSHFLSAGNDGHIIHWDVASASILRK, and ATQAHEFIYSMTLSDSHILTTGEDGTLEFWAIDGGKDGNL. One can recognise a PFU domain in the interval 397-497; it reads PIHYLEEITR…DKLSKGAASA (101 aa). The disordered stretch occupies residues 494-585; that stretch reads AASAQSGYED…LPQNKKKPRG (92 aa). A PUL domain is found at 586 to 856; that stretch reads PLVPVPDFYI…KNIARDIVEM (271 aa).

Belongs to the WD repeat PLAP family. As to quaternary structure, interacts with cdc-48.1. In terms of tissue distribution, expressed in intestine (at protein level).

It is found in the cytoplasm. Functionally, plays a role in protein ubiquitination, sorting and degradation through its association with cdc-48.1 and/or cdc-48.2. This is Ubiquitin fusion degradation protein 3 homolog from Caenorhabditis elegans.